A 262-amino-acid polypeptide reads, in one-letter code: Polyamine aminopropyltransferase (262 aa).

The PABS domain occupies 1 to 249 (MWITQEITPY…DIHRAAFALP (249 aa)). Residue asparagine 29 participates in S-methyl-5'-thioadenosine binding. Position 83 (aspartate 83) interacts with spermidine. The active-site Proton acceptor is the aspartate 155.

As to quaternary structure, homodimer.

It is found in the cytoplasm. The catalysed reaction is S-adenosyl 3-(methylsulfanyl)propylamine + putrescine = S-methyl-5'-thioadenosine + spermidine + H(+). The protein operates within amine and polyamine biosynthesis; spermidine biosynthesis; spermidine from putrescine: step 1/1. Inhibited by methylglyoxal bis(cyclopentylamidinohydrazone)(MGBCP). Its function is as follows. Involved in the cell growth and proliferation. Catalyzes the irreversible transfer of a propylamine group from the amino donor S-adenosylmethioninamine (decarboxy-AdoMet) to putrescine (1,4-diaminobutane) to yield spermidine. Spermidine cannot be used as an aminopropyl acceptor. This chain is Polyamine aminopropyltransferase, found in Helicobacter pylori (strain ATCC 700392 / 26695) (Campylobacter pylori).